Reading from the N-terminus, the 146-residue chain is Late protein H7 (146 aa).

The chain crosses the membrane as a helical span at residues 10–32 (LAMTAFFGELNTLDIMALIMSIF).

Belongs to the chordopoxvirinae H7 family.

It is found in the membrane. Contributes to the formation of crescents and immature virions (IV). The polypeptide is Late protein H7 (Vaccinia virus (strain Tian Tan) (VACV)).